The primary structure comprises 578 residues: CTP synthase (578 aa).

Residues 305–559 (KIALVGKYTN…LGLVAASSGI (255 aa)) enclose the Glutamine amidotransferase type-1 domain. Active-site for GATase activity residues include Cys404, His535, and Glu537.

The protein belongs to the CTP synthase family.

The enzyme catalyses UTP + L-glutamine + ATP + H2O = CTP + L-glutamate + ADP + phosphate + 2 H(+). The protein operates within pyrimidine metabolism; CTP biosynthesis via de novo pathway; CTP from UDP: step 2/2. Its function is as follows. Catalyzes the ATP-dependent amination of UTP to CTP with either L-glutamine or ammonia as the source of nitrogen. The chain is CTP synthase (URA7) from Candida glabrata (strain ATCC 2001 / BCRC 20586 / JCM 3761 / NBRC 0622 / NRRL Y-65 / CBS 138) (Yeast).